The chain runs to 168 residues: 3-hydroxyacyl-[acyl-carrier-protein] dehydratase FabZ (168 aa).

The active site involves H54.

This sequence belongs to the thioester dehydratase family. FabZ subfamily.

It localises to the cytoplasm. It carries out the reaction a (3R)-hydroxyacyl-[ACP] = a (2E)-enoyl-[ACP] + H2O. Its function is as follows. Involved in unsaturated fatty acids biosynthesis. Catalyzes the dehydration of short chain beta-hydroxyacyl-ACPs and long chain saturated and unsaturated beta-hydroxyacyl-ACPs. This chain is 3-hydroxyacyl-[acyl-carrier-protein] dehydratase FabZ, found in Yersinia enterocolitica serotype O:8 / biotype 1B (strain NCTC 13174 / 8081).